We begin with the raw amino-acid sequence, 422 residues long: Probable zinc-type alcohol dehydrogenase-like protein L498 (422 aa).

Zn(2+) is bound by residues Cys-108, His-129, Cys-160, Cys-163, Cys-166, Cys-174, and Cys-231.

Zn(2+) is required as a cofactor.

The protein resides in the host cytoplasm. Its subcellular location is the virion. The chain is Probable zinc-type alcohol dehydrogenase-like protein L498 from Acanthamoeba polyphaga (Amoeba).